A 998-amino-acid polypeptide reads, in one-letter code: 2-imino-3-(indol-3-yl)propanoate dimerase (998 aa).

It catalyses the reaction 2 H2O2 = O2 + 2 H2O. The enzyme catalyses 2 2-iminio-3-(indol-3-yl)propanoate + H2O2 = indole-3-pyruvate imine dimer + 2 H2O. Its pathway is pigment biosynthesis; violacein biosynthesis. In terms of biological role, catalyzes the hydrogen peroxide-dependent dimerization of two L-tryptophan-derived molecules (imine form of indole 3-pyruvate (IPA)), to form an uncharacterized product suggested to be indole-3-pyruvate imine dimer that can spontaneously convert into dichlorochromopyrrolate (CPA). The uncharacterized product is the substrate of VioE. This is 2-imino-3-(indol-3-yl)propanoate dimerase (vioB) from Chromobacterium violaceum (strain ATCC 12472 / DSM 30191 / JCM 1249 / CCUG 213 / NBRC 12614 / NCIMB 9131 / NCTC 9757 / MK).